A 423-amino-acid chain; its full sequence is Serine--tRNA ligase (423 aa).

231 to 233 (TAE) is an L-serine binding site. An ATP-binding site is contributed by 262–264 (RSE). Position 285 (Glu285) interacts with L-serine. 349-352 (EISS) lines the ATP pocket. Ser384 lines the L-serine pocket.

It belongs to the class-II aminoacyl-tRNA synthetase family. Type-1 seryl-tRNA synthetase subfamily. As to quaternary structure, homodimer. The tRNA molecule binds across the dimer.

The protein localises to the cytoplasm. It catalyses the reaction tRNA(Ser) + L-serine + ATP = L-seryl-tRNA(Ser) + AMP + diphosphate + H(+). The catalysed reaction is tRNA(Sec) + L-serine + ATP = L-seryl-tRNA(Sec) + AMP + diphosphate + H(+). It participates in aminoacyl-tRNA biosynthesis; selenocysteinyl-tRNA(Sec) biosynthesis; L-seryl-tRNA(Sec) from L-serine and tRNA(Sec): step 1/1. In terms of biological role, catalyzes the attachment of serine to tRNA(Ser). Is also able to aminoacylate tRNA(Sec) with serine, to form the misacylated tRNA L-seryl-tRNA(Sec), which will be further converted into selenocysteinyl-tRNA(Sec). The chain is Serine--tRNA ligase from Lactococcus lactis subsp. cremoris (strain MG1363).